The following is a 169-amino-acid chain: uncharacterized protein (169 aa).

Residues Met-1 to Ala-21 form the signal peptide.

As to expression, component of the acid-soluble and acid-insoluble organic matrix of calcified shell layers (at protein level).

The protein resides in the secreted. This is an uncharacterized protein from Haliotis asinina (Donkey's ear abalone).